Reading from the N-terminus, the 1020-residue chain is Protein CLASP-2 (1020 aa).

Low complexity predominate over residues 259–271; that stretch reads ASDAASSSTSINS. 3 disordered regions span residues 259-280, 329-387, and 419-461; these read ASDAASSSTSINSERGTAPFRS, PMTT…RPSA, and LQKA…ALDT. A compositionally biased stretch (polar residues) spans 329–343; the sequence is PMTTRTLSKIDTSPG. Low complexity predominate over residues 372–381; it reads SQPGSRNGSP. A compositionally biased stretch (polar residues) spans 450–460; the sequence is QKATPQKSALD. One copy of the HEAT repeat lies at 954 to 992; the sequence is LAPCVIKSYDSPSSAVRKTAVYCLVAMVNKLGMKTMEPH.

This sequence belongs to the CLASP family. Interacts with hcp-1 and hcp-2.

The protein resides in the cytoplasm. The protein localises to the cytoskeleton. It localises to the microtubule organizing center. Its subcellular location is the centrosome. It is found in the chromosome. The protein resides in the centromere. The protein localises to the kinetochore. It localises to the spindle. In terms of biological role, probable microtubule plus-end tracking protein that promotes the stabilization of dynamic microtubules. Required for the formation of mitotic and meiotic spindles. Specifically promotes the polymerization of kinetochore-bound microtubules. Also required for cytoplasmic streaming. Essential for embryonic development. The sequence is that of Protein CLASP-2 (cls-2) from Caenorhabditis elegans.